Consider the following 212-residue polypeptide: Ribonuclease HII (212 aa).

The RNase H type-2 domain occupies 20-209 (TCVVGVDEVG…VHNILYQEAS (190 aa)). The a divalent metal cation site is built by aspartate 26, glutamate 27, and aspartate 117.

The protein belongs to the RNase HII family. The cofactor is Mn(2+). Mg(2+) serves as cofactor.

The protein localises to the cytoplasm. It carries out the reaction Endonucleolytic cleavage to 5'-phosphomonoester.. Endonuclease that specifically degrades the RNA of RNA-DNA hybrids. The polypeptide is Ribonuclease HII (Cereibacter sphaeroides (strain ATCC 17029 / ATH 2.4.9) (Rhodobacter sphaeroides)).